Reading from the N-terminus, the 422-residue chain is L-threonine dehydratase biosynthetic IlvA (422 aa).

At lysine 60 the chain carries N6-(pyridoxal phosphate)lysine. Residues asparagine 87, 190-194 (GGGGL), and serine 315 contribute to the pyridoxal 5'-phosphate site. Positions 339 to 413 (HYFIVNFPQR…KPFHYVEVNK (75 aa)) constitute an ACT-like domain.

The protein belongs to the serine/threonine dehydratase family. In terms of assembly, homotetramer. Pyridoxal 5'-phosphate serves as cofactor.

The enzyme catalyses L-threonine = 2-oxobutanoate + NH4(+). Its pathway is amino-acid biosynthesis; L-isoleucine biosynthesis; 2-oxobutanoate from L-threonine: step 1/1. Functionally, catalyzes the anaerobic formation of alpha-ketobutyrate and ammonia from threonine in a two-step reaction. The first step involved a dehydration of threonine and a production of enamine intermediates (aminocrotonate), which tautomerizes to its imine form (iminobutyrate). Both intermediates are unstable and short-lived. The second step is the nonenzymatic hydrolysis of the enamine/imine intermediates to form 2-ketobutyrate and free ammonia. In the low water environment of the cell, the second step is accelerated by RidA. The sequence is that of L-threonine dehydratase biosynthetic IlvA (ilvA) from Bacillus subtilis (strain 168).